The primary structure comprises 393 residues: Phosphoglycerate kinase (393 aa).

Residues 21–23, Arg36, 59–62, Arg114, and Arg147 each bind substrate; these read DMN and HLGR. ATP is bound by residues Lys198, Glu320, and 346-349; that span reads GGDT.

The protein belongs to the phosphoglycerate kinase family. As to quaternary structure, monomer.

It is found in the cytoplasm. It carries out the reaction (2R)-3-phosphoglycerate + ATP = (2R)-3-phospho-glyceroyl phosphate + ADP. The protein operates within carbohydrate degradation; glycolysis; pyruvate from D-glyceraldehyde 3-phosphate: step 2/5. The chain is Phosphoglycerate kinase from Thiobacillus denitrificans (strain ATCC 25259 / T1).